Here is a 371-residue protein sequence, read N- to C-terminus: Neuropeptide Y receptor type 6 (371 aa).

The Extracellular portion of the chain corresponds to 1–31; sequence MEVSLNDPASNKTSAKSNSSAFFYFESCQSP. 2 N-linked (GlcNAc...) asparagine glycosylation sites follow: Asn11 and Asn18. The chain crosses the membrane as a helical span at residues 32 to 52; sequence SLALLLLLIAYTVVLIMGICG. At 53 to 72 the chain is on the cytoplasmic side; it reads NLSLITIIFKKQREAQNVTN. A helical transmembrane segment spans residues 73-93; the sequence is ILIANLSLSDILVCVMCIPFT. Residues 94-111 are Extracellular-facing; the sequence is AIYTLMDRWIFGNTMCKL. A disulfide bond links Cys109 and Cys196. The helical transmembrane segment at 112–132 threads the bilayer; that stretch reads TSYVQSVSISVSIFSLVLIAI. Over 133–150 the chain is Cytoplasmic; that stretch reads ERYQLIVNPRGWKPSASH. Residues 151-171 form a helical membrane-spanning segment; the sequence is AYWGIMLIWLFSLLLSIPLLL. At 172 to 213 the chain is on the extracellular side; that stretch reads SYHLTDEPFRNLSLPTDLYSHHVVCVEHWPSKTNQLLYSTSL. Asn182 carries an N-linked (GlcNAc...) asparagine glycan. A helical membrane pass occupies residues 214–234; that stretch reads IMLQYFVPLGFMFICYLKIVI. Residues 235 to 263 are Cytoplasmic-facing; that stretch reads CLHKRNSKIDRRRENESRLTENKRINTML. Residues 264–284 traverse the membrane as a helical segment; sequence ISIVVTFAACWLPLNTFNVIF. Residues 285-297 are Extracellular-facing; sequence DWYHEVLMSCHHD. Residues 298–318 traverse the membrane as a helical segment; it reads LVFAICHLVAMVSTCINPLFY. Residues 319–371 are Cytoplasmic-facing; sequence GFLNRNFQKDLVVLIHHCLCFALRERYENIAISTLHTDESKGSLRVAHIPAGI. Cys336 carries S-palmitoyl cysteine lipidation.

Belongs to the G-protein coupled receptor 1 family. Expressed in hippocampus, striatum, hypothalamus, cerebellum, small intestine, colon and adrenal gland.

The protein resides in the cell membrane. Functionally, receptor for neuropeptide Y and peptide YY. The activity of this receptor is mediated by G proteins that inhibit adenylate cyclase activity. This Oryctolagus cuniculus (Rabbit) protein is Neuropeptide Y receptor type 6 (NPY6R).